Here is a 201-residue protein sequence, read N- to C-terminus: Recombination protein RecR (201 aa).

The C4-type zinc finger occupies 60 to 75 (CSVCGNVDSCDPCTIC). The 96-residue stretch at 83–178 (STLIVVETVG…RTTRLAHGVP (96 aa)) folds into the Toprim domain.

Belongs to the RecR family.

May play a role in DNA repair. It seems to be involved in an RecBC-independent recombinational process of DNA repair. It may act with RecF and RecO. This is Recombination protein RecR from Methylocella silvestris (strain DSM 15510 / CIP 108128 / LMG 27833 / NCIMB 13906 / BL2).